Here is a 324-residue protein sequence, read N- to C-terminus: tRNA-modifying protein YgfZ (324 aa).

Tryptophan 184 contributes to the folate binding site.

The protein belongs to the tRNA-modifying YgfZ family.

It is found in the cytoplasm. In terms of biological role, folate-binding protein involved in regulating the level of ATP-DnaA and in the modification of some tRNAs. It is probably a key factor in regulatory networks that act via tRNA modification, such as initiation of chromosomal replication. In Vibrio vulnificus (strain CMCP6), this protein is tRNA-modifying protein YgfZ.